The sequence spans 401 residues: MARPDLHERISSLRKLRVAQERVRVRRQVGRRDGVRLEIDGRWLTGFCSNDYLGLSQQFEVVAALQDAAARDGAGATASHLICGHHTAHETLEREIADWLGYPSALLFGSGFIANLAVQQALLSEEDDVCVQDRLNHASLLDATRLAGCRLRRYPHLDVEGAMRQLKGAPEGAAMLATDGVFSMDGDVAPLRALSLVARMQHALFYVDDAHGVGVLGPQGRGCVADAGLGVAEVPLQLVTLGKALGGYGAVVVGEEALVRHLAETARPYIYTTALPPAQVAATLAAVRLARRDDWRRTRLVELIGAFRDGARKHGFELMASDTPIQPLLCGEEATVMAMSAALEHAGFMVGAIRPPTVPEGKARLRVTLSALHTPQQVQALIEAIVQARDVVSRQPLRASA.

Position 24 (Arg24) interacts with substrate. Position 111-112 (111-112) interacts with pyridoxal 5'-phosphate; it reads GF. A substrate-binding site is contributed by His137. Pyridoxal 5'-phosphate-binding residues include Ser183, His211, and Thr240. N6-(pyridoxal phosphate)lysine is present on Lys243. Residue Thr357 participates in substrate binding.

The protein belongs to the class-II pyridoxal-phosphate-dependent aminotransferase family. BioF subfamily. In terms of assembly, homodimer. Pyridoxal 5'-phosphate is required as a cofactor.

The catalysed reaction is 6-carboxyhexanoyl-[ACP] + L-alanine + H(+) = (8S)-8-amino-7-oxononanoate + holo-[ACP] + CO2. Its pathway is cofactor biosynthesis; biotin biosynthesis. In terms of biological role, catalyzes the decarboxylative condensation of pimeloyl-[acyl-carrier protein] and L-alanine to produce 8-amino-7-oxononanoate (AON), [acyl-carrier protein], and carbon dioxide. The sequence is that of 8-amino-7-oxononanoate synthase from Xanthomonas euvesicatoria pv. vesicatoria (strain 85-10) (Xanthomonas campestris pv. vesicatoria).